A 340-amino-acid chain; its full sequence is Dual specificity protein phosphatase 12 (340 aa).

At Met-1 the chain carries N-acetylmethionine. Residues Gln-26 to Glu-171 form the Tyrosine-protein phosphatase domain. Cys-115 acts as the Phosphocysteine intermediate in catalysis. A substrate-binding site is contributed by His-116–Arg-121. Residue Ser-335 is modified to Phosphoserine.

This sequence belongs to the protein-tyrosine phosphatase family. Non-receptor class dual specificity subfamily. As to quaternary structure, monomer. It depends on Zn(2+) as a cofactor. In terms of tissue distribution, ubiquitous, highest expression in spleen, testis, ovary, and peripheral blood leukocytes and lower expression in liver and lung.

Its subcellular location is the nucleus. The protein localises to the cytoplasm. It localises to the cytosol. It carries out the reaction O-phospho-L-tyrosyl-[protein] + H2O = L-tyrosyl-[protein] + phosphate. It catalyses the reaction O-phospho-L-seryl-[protein] + H2O = L-seryl-[protein] + phosphate. The enzyme catalyses O-phospho-L-threonyl-[protein] + H2O = L-threonyl-[protein] + phosphate. In terms of biological role, dual specificity phosphatase; can dephosphorylate both phosphotyrosine and phosphoserine or phosphothreonine residues. Can dephosphorylate glucokinase (in vitro). Has phosphatase activity with the synthetic substrate 6,8-difluoro-4-methylumbelliferyl phosphate and other in vitro substrates. The protein is Dual specificity protein phosphatase 12 (DUSP12) of Homo sapiens (Human).